The primary structure comprises 160 residues: Small ribosomal subunit protein uS7 (160 aa).

The protein belongs to the universal ribosomal protein uS7 family. As to quaternary structure, part of the 30S ribosomal subunit. Contacts proteins S9 and S11.

In terms of biological role, one of the primary rRNA binding proteins, it binds directly to 16S rRNA where it nucleates assembly of the head domain of the 30S subunit. Is located at the subunit interface close to the decoding center, probably blocks exit of the E-site tRNA. This Anaplasma phagocytophilum (strain HZ) protein is Small ribosomal subunit protein uS7.